The following is a 266-amino-acid chain: Large ribosomal subunit protein eL8 (266 aa).

A compositionally biased stretch (basic and acidic residues) spans 104–130 (PETKQEKKQRLLARAEQKAAGKGDTPT). Residues 104 to 135 (PETKQEKKQRLLARAEQKAAGKGDTPTKRPPV) form a disordered region.

It belongs to the eukaryotic ribosomal protein eL8 family. Component of the large ribosomal subunit.

It localises to the cytoplasm. In terms of biological role, component of the large ribosomal subunit. The ribosome is a large ribonucleoprotein complex responsible for the synthesis of proteins in the cell. The sequence is that of Large ribosomal subunit protein eL8 (RPL7A) from Gallus gallus (Chicken).